The primary structure comprises 253 residues: tRNA (guanine-N(1)-)-methyltransferase (253 aa).

S-adenosyl-L-methionine-binding positions include glycine 113 and 133-138; that span reads IGDYVL.

It belongs to the RNA methyltransferase TrmD family. In terms of assembly, homodimer.

The protein resides in the cytoplasm. It carries out the reaction guanosine(37) in tRNA + S-adenosyl-L-methionine = N(1)-methylguanosine(37) in tRNA + S-adenosyl-L-homocysteine + H(+). In terms of biological role, specifically methylates guanosine-37 in various tRNAs. This chain is tRNA (guanine-N(1)-)-methyltransferase, found in Chloroflexus aurantiacus (strain ATCC 29366 / DSM 635 / J-10-fl).